The following is a 278-amino-acid chain: Phosphate import ATP-binding protein PstB (278 aa).

Positions 32-273 (YETRDLNLWY…PSDKRTEDYI (242 aa)) constitute an ABC transporter domain. An ATP-binding site is contributed by 64 to 71 (GPSGCGKS).

It belongs to the ABC transporter superfamily. Phosphate importer (TC 3.A.1.7) family. As to quaternary structure, the complex is composed of two ATP-binding proteins (PstB), two transmembrane proteins (PstC and PstA) and a solute-binding protein (PstS).

Its subcellular location is the cell membrane. The catalysed reaction is phosphate(out) + ATP + H2O = ADP + 2 phosphate(in) + H(+). Part of the ABC transporter complex PstSACB involved in phosphate import. Responsible for energy coupling to the transport system. This chain is Phosphate import ATP-binding protein PstB, found in Halalkalibacterium halodurans (strain ATCC BAA-125 / DSM 18197 / FERM 7344 / JCM 9153 / C-125) (Bacillus halodurans).